Reading from the N-terminus, the 292-residue chain is Norajmaline N-methyltransferase (292 aa).

Positions 71–80 (KNMLDIGCGV) are SAM motif I. An SAM motif II region spans residues 134 to 142 (KDGTFDLVL). The Vacuolar targeting signal signature appears at 135 to 141 (DGTFDLV). Positions 161 to 170 (IRVAAPGAPI) are SAM motif III.

It belongs to the class I-like SAM-binding methyltransferase superfamily. gTMT family. As to quaternary structure, homodimer. In terms of tissue distribution, mainly expressed in mature roots and, to a lesser extent, in leaves, stems and flowers.

It localises to the vacuole membrane. It carries out the reaction norajmaline + S-adenosyl-L-methionine = ajmaline + S-adenosyl-L-homocysteine + H(+). The enzyme catalyses 4-methylnorajmaline + S-adenosyl-L-methionine = 4-methylajmaline + S-adenosyl-L-homocysteine + H(+). It functions in the pathway alkaloid biosynthesis; ajmaline biosynthesis. N-methyltransferase involved in the biosynthesis of ajmaline-type monoterpenoid indole alkaloids (MIAs) natural products, important plant-derived pharmaceuticals used in the therapy of heart disorders. Catalyzes the indole N-methylation of norajmaline to produce ajmaline. Also able, with a lower efficiency, to mediates the conversion of 4-methylnorajmaline to 4-methylajmaline. The polypeptide is Norajmaline N-methyltransferase (Rauvolfia serpentina (Serpentine wood)).